The primary structure comprises 280 residues: Pantothenate synthetase (280 aa).

Residue 30-37 coordinates ATP; it reads MGYLHEGH. Catalysis depends on His37, which acts as the Proton donor. Gln61 lines the (R)-pantoate pocket. Gln61 serves as a coordination point for beta-alanine. An ATP-binding site is contributed by 147-150; sequence GQKD. Gln153 contacts (R)-pantoate. Residues Val176 and 184–187 contribute to the ATP site; that span reads MSSR.

This sequence belongs to the pantothenate synthetase family. Homodimer.

The protein localises to the cytoplasm. It carries out the reaction (R)-pantoate + beta-alanine + ATP = (R)-pantothenate + AMP + diphosphate + H(+). Its pathway is cofactor biosynthesis; (R)-pantothenate biosynthesis; (R)-pantothenate from (R)-pantoate and beta-alanine: step 1/1. In terms of biological role, catalyzes the condensation of pantoate with beta-alanine in an ATP-dependent reaction via a pantoyl-adenylate intermediate. The protein is Pantothenate synthetase of Thermosipho melanesiensis (strain DSM 12029 / CIP 104789 / BI429).